A 591-amino-acid polypeptide reads, in one-letter code: Acetyltransferase spyB (591 aa).

Residue asparagine 114 is glycosylated (N-linked (GlcNAc...) asparagine). The next 9 membrane-spanning stretches (helical) occupy residues 123 to 143 (GTII…LIFL), 168 to 188 (TLLY…ILIL), 199 to 219 (LWIF…ISHG), 228 to 248 (VGVQ…INPL), 309 to 329 (SAFL…LNCA), 383 to 403 (ASIL…PLFG), 453 to 473 (IFFV…LMGI), 481 to 501 (ILFF…QAAW), and 529 to 549 (LVGF…WLCP).

It belongs to the wax synthase family.

The protein resides in the membrane. It carries out the reaction sartorypyrone F + acetyl-CoA = sartorypyrone G + CoA. The catalysed reaction is sartorypyrone D + acetyl-CoA = sartorypyrone A + CoA. Its pathway is secondary metabolite biosynthesis; terpenoid biosynthesis. Acetyltransferase; part of the gene cluster that mediates the biosynthesis of meroterpenoids called sartorypyrones. SpyB catalyzes the last step of the pathway and is responsible for the acetylation of sartorypyrones D and F to produce sartorypyrones A and G, respectively. The biosynthesis of sartorypyrones begins with the production of triacetic acid lactone (TAL) by the NR-PKS spyA using one molecule of acetyl-CoA and two molecules of malonyl-CoA. The prenyltransferase spyF then conjugates geranylgeranyl pyrophosphate (GGPP) to TAL to form geranylgeranyl-triacetate lactone, for which the pathway-specific geranylgeranyl pyrophosphate synthase (GGPS) spyE is required to provide GGPP. Subsequently, geranylgeranyl-triacetate lactone is epoxidized at the terminal olein by the FAD-dependent monooxygenase spyC, followed by cyclization of the terpenoid component catalyzed by the terpene cyclase spyD to produce both the bicyclic sartorypyrone F and the monocyclic sartorypyrone D. Finally, the last step of the biosynthesis involves the acetylation of the meroterpenoids sartorypyrones D and F by the acetyltransferase SpyB to produce sartorypyrones A and G, respectively. The chain is Acetyltransferase spyB from Aspergillus fumigatus (strain ATCC MYA-4609 / CBS 101355 / FGSC A1100 / Af293) (Neosartorya fumigata).